Here is a 391-residue protein sequence, read N- to C-terminus: NADH-quinone oxidoreductase subunit D (391 aa).

Belongs to the complex I 49 kDa subunit family. As to quaternary structure, NDH-1 is composed of 14 different subunits. Subunits NuoB, C, D, E, F, and G constitute the peripheral sector of the complex.

It localises to the cell inner membrane. It catalyses the reaction a quinone + NADH + 5 H(+)(in) = a quinol + NAD(+) + 4 H(+)(out). In terms of biological role, NDH-1 shuttles electrons from NADH, via FMN and iron-sulfur (Fe-S) centers, to quinones in the respiratory chain. The immediate electron acceptor for the enzyme in this species is believed to be ubiquinone. Couples the redox reaction to proton translocation (for every two electrons transferred, four hydrogen ions are translocated across the cytoplasmic membrane), and thus conserves the redox energy in a proton gradient. This Rickettsia canadensis (strain McKiel) protein is NADH-quinone oxidoreductase subunit D.